The chain runs to 318 residues: Probable pyridoxal 5'-phosphate synthase subunit PDX1.1 (318 aa).

Residue Asp-49 coordinates D-ribose 5-phosphate. The active-site Schiff-base intermediate with D-ribose 5-phosphate is Lys-106. Gly-178 provides a ligand contact to D-ribose 5-phosphate. Arg-190 contributes to the D-glyceraldehyde 3-phosphate binding site. D-ribose 5-phosphate contacts are provided by residues Gly-239 and 260-261; that span reads GS.

It belongs to the PdxS/SNZ family.

The enzyme catalyses aldehydo-D-ribose 5-phosphate + D-glyceraldehyde 3-phosphate + L-glutamine = pyridoxal 5'-phosphate + L-glutamate + phosphate + 3 H2O + H(+). It participates in cofactor biosynthesis; pyridoxal 5'-phosphate biosynthesis. Catalyzes the formation of pyridoxal 5'-phosphate from ribose 5-phosphate (RBP), glyceraldehyde 3-phosphate (G3P) and ammonia. The ammonia is provided by PDX2. Can also use ribulose 5-phosphate and dihydroxyacetone phosphate as substrates, resulting from enzyme-catalyzed isomerization of RBP and G3P, respectively. Also plays an indirect role in resistance to singlet oxygen-generating photosensitizers. This chain is Probable pyridoxal 5'-phosphate synthase subunit PDX1.1 (PDX11), found in Oryza sativa subsp. japonica (Rice).